The primary structure comprises 357 residues: UDP-N-acetylglucosamine--N-acetylmuramyl-(pentapeptide) pyrophosphoryl-undecaprenol N-acetylglucosamine transferase (357 aa).

UDP-N-acetyl-alpha-D-glucosamine is bound by residues 15–17 (TGG), Asn-124, Arg-165, Ser-194, and Gln-288.

This sequence belongs to the glycosyltransferase 28 family. MurG subfamily.

It localises to the cell inner membrane. The catalysed reaction is di-trans,octa-cis-undecaprenyl diphospho-N-acetyl-alpha-D-muramoyl-L-alanyl-D-glutamyl-meso-2,6-diaminopimeloyl-D-alanyl-D-alanine + UDP-N-acetyl-alpha-D-glucosamine = di-trans,octa-cis-undecaprenyl diphospho-[N-acetyl-alpha-D-glucosaminyl-(1-&gt;4)]-N-acetyl-alpha-D-muramoyl-L-alanyl-D-glutamyl-meso-2,6-diaminopimeloyl-D-alanyl-D-alanine + UDP + H(+). It functions in the pathway cell wall biogenesis; peptidoglycan biosynthesis. In terms of biological role, cell wall formation. Catalyzes the transfer of a GlcNAc subunit on undecaprenyl-pyrophosphoryl-MurNAc-pentapeptide (lipid intermediate I) to form undecaprenyl-pyrophosphoryl-MurNAc-(pentapeptide)GlcNAc (lipid intermediate II). The protein is UDP-N-acetylglucosamine--N-acetylmuramyl-(pentapeptide) pyrophosphoryl-undecaprenol N-acetylglucosamine transferase of Nostoc sp. (strain PCC 7120 / SAG 25.82 / UTEX 2576).